We begin with the raw amino-acid sequence, 88 residues long: Apolipoprotein C-I (88 aa).

Residues 1 to 26 (MRLFLSLPVLVVVLAMVLEGPAPTQA) form the signal peptide.

This sequence belongs to the apolipoprotein C1 family.

The protein resides in the secreted. Functionally, inhibitor of lipoprotein binding to the low density lipoprotein (LDL) receptor, LDL receptor-related protein, and very low density lipoprotein (VLDL) receptor. Associates with high density lipoproteins (HDL) and the triacylglycerol-rich lipoproteins in the plasma and makes up about 10% of the protein of the VLDL and 2% of that of HDL. Appears to interfere directly with fatty acid uptake and is also the major plasma inhibitor of cholesteryl ester transfer protein (CETP). Binds free fatty acids and reduces their intracellular esterification. Modulates the interaction of APOE with beta-migrating VLDL and inhibits binding of beta-VLDL to the LDL receptor-related protein. This is Apolipoprotein C-I (APOC1) from Leptonychotes weddellii (Weddell seal).